The chain runs to 603 residues: NADH-ubiquinone oxidoreductase chain 5 (603 aa).

16 helical membrane passes run 4-24 (YATMTTLALTSLIPPILGALI), 38-58 (SIIASTFIISLFPTTMFMCLD), 87-107 (MTFIPVALFVTWSIMEFSLWY), 122-142 (LIFLITMLILVTANNLFQLFI), 144-160 (WEGVGIMSFLLISWWYA), 171-191 (AILYNRIGDIGFVLALAWFLL), 211-233 (TPLLGFLLAAAGKSAQLGLHPWL), 241-261 (TPVSALLHSSTMVVAGIFLLI), 272-292 (LIQTLTLCLGAITTLFAAVCA), 301-320 (IVAFSTSSQLGLMMVTIGIN), 325-347 (AFLHICTHAFFKAMLFMCSGSII), 370-390 (STSLTIGSLALAGMPFLTGFY), 405-422 (NAWALSITLIATSLTSAY), 457-477 (LTIGSLFAGFLITNNILPMST), 482-502 (IPLYLKLTALGVTSLGLLTAL), and 582-602 (GMIKLYFLSFFFPLILTLLLI).

The protein belongs to the complex I subunit 5 family. Core subunit of respiratory chain NADH dehydrogenase (Complex I) which is composed of 45 different subunits.

Its subcellular location is the mitochondrion inner membrane. The catalysed reaction is a ubiquinone + NADH + 5 H(+)(in) = a ubiquinol + NAD(+) + 4 H(+)(out). Core subunit of the mitochondrial membrane respiratory chain NADH dehydrogenase (Complex I) which catalyzes electron transfer from NADH through the respiratory chain, using ubiquinone as an electron acceptor. Essential for the catalytic activity and assembly of complex I. The sequence is that of NADH-ubiquinone oxidoreductase chain 5 (MT-ND5) from Pan troglodytes (Chimpanzee).